A 169-amino-acid chain; its full sequence is TPD1 protein homolog 1B (169 aa).

Positions 1 to 25 (MADCTTMRLASSVTIILLLLVASQA) are cleaved as a signal peptide.

In terms of tissue distribution, expressed in roots, and at low levels in anthers during meiosis.

Its function is as follows. May play a role during anther development. This is TPD1 protein homolog 1B from Oryza sativa subsp. japonica (Rice).